The sequence spans 168 residues: Microtubule-associated protein Jupiter (168 aa).

Residues 1–14 (MISNFDCTDNQASS) are compositionally biased toward polar residues. The interval 1 to 33 (MISNFDCTDNQASSKVLRPPGGGSSDIFGSEMP) is disordered. Serine 24 bears the Phosphoserine mark. Threonine 35 bears the Phosphothreonine mark. The segment covering 76-87 (RGQKTVDSHSRL) has biased composition (basic and acidic residues). Disordered stretches follow at residues 76 to 106 (RGQKTVDSHSRLFGEPTRPITPGKNHMKSSI) and 124 to 168 (NGHY…GAGK). Residues threonine 92 and threonine 96 each carry the phosphothreonine modification. 3 positions are modified to phosphoserine: serine 105, serine 133, and serine 144. Low complexity predominate over residues 131–144 (SGSVSSASSSVSSS). Residues 145-155 (TENLKMNSGSR) are compositionally biased toward polar residues.

It belongs to the MAP Jupiter family.

It localises to the nucleus. The protein resides in the cytoplasm. It is found in the cytoskeleton. The protein localises to the spindle. Functionally, binds to all microtubule populations. In Drosophila simulans (Fruit fly), this protein is Microtubule-associated protein Jupiter.